The chain runs to 903 residues: Disintegrin and metalloproteinase domain-containing protein 12 (903 aa).

The first 31 residues, 1–31 (MAERPARRAPPARALLLALAGALLAPRAARG), serve as a signal peptide directing secretion. Residues 32–205 (MSLWDQRGTY…SQMRARRHKR (174 aa)) constitute a propeptide that is removed on maturation. Asn112, Asn147, and Asn157 each carry an N-linked (GlcNAc...) asparagine glycan. A Cysteine switch motif is present at residues 175–182 (GLCGSQHN). Residue Cys177 participates in Zn(2+) binding. 2 N-linked (GlcNAc...) asparagine glycosylation sites follow: Asn182 and Asn185. Residues 206–706 (ETLKMTKYVE…GPIRQADNQG (501 aa)) are Extracellular-facing. Residues 212–414 (KYVELVIVAD…GMGMCLFNLP (203 aa)) enclose the Peptidase M12B domain. Intrachain disulfides connect Cys323/Cys409, Cys365/Cys393, and Cys367/Cys376. His348 provides a ligand contact to Zn(2+). Glu349 is a catalytic residue. Zn(2+)-binding residues include His352 and His358. In terms of domain architecture, Disintegrin spans 422–508 (GRKCGNGYVE…HCPANVYLHD (87 aa)). Residue Asn450 is glycosylated (N-linked (GlcNAc...) asparagine). Cys480 and Cys500 are joined by a disulfide. Asn649 carries an N-linked (GlcNAc...) asparagine glycan. Positions 654-686 (GVHKCAMQCHGRGVCNNRKNCHCEAHWAPPFCD) constitute an EGF-like domain. 3 disulfides stabilise this stretch: Cys658/Cys668, Cys662/Cys674, and Cys676/Cys685. The chain crosses the membrane as a helical span at residues 707 to 727 (LTVGILVSILCLLAAGFVVYL). The Cytoplasmic portion of the chain corresponds to 728–903 (KRKTLMRLLF…PRPSHNAYIK (176 aa)). Disordered stretches follow at residues 753–790 (SRTP…HSLK) and 819–903 (HQTP…AYIK). 2 consecutive short sequence motifs (SH3-binding; class II) follow at residues 824 to 830 (APSGPAR) and 846 to 852 (KPSPPQK). 3 short sequence motifs (SH3-binding; class I) span residues 830 to 837 (RPLPASPA), 852 to 858 (KPLPADP), and 881 to 887 (RPAPIRP). Positions 847 to 856 (PSPPQKPLPA) are enriched in pro residues. Tyr901 carries the phosphotyrosine; by SRC modification.

As to quaternary structure, interacts with alpha-actinin-2 and with syndecans. Interacts with SH3PXD2A. Interacts with FST3. Interacts with RACK1; the interaction is required for PKC-dependent translocation of ADAM12 to the cell membrane. The cofactor is Zn(2+). Post-translationally, the precursor is cleaved by a furin endopeptidase. Expressed during early developing mesenchymal cells that give rise to skeletal muscle, bones and visceral organs. Not expressed in adult normal muscle but expressed in regenerating muscle.

Its subcellular location is the membrane. Involved in skeletal muscle regeneration, specifically at the onset of cell fusion. Also involved in macrophage-derived giant cells (MGC) and osteoclast formation from mononuclear precursors. The chain is Disintegrin and metalloproteinase domain-containing protein 12 (Adam12) from Mus musculus (Mouse).